Consider the following 170-residue polypeptide: Aspartate 1-decarboxylase (170 aa).

S25 acts as the Schiff-base intermediate with substrate; via pyruvic acid in catalysis. A Pyruvic acid (Ser) modification is found at S25. T57 lines the substrate pocket. Y58 (proton donor) is an active-site residue. Substrate is bound at residue 73-75 (GAA). The interval 118–170 (GHDPAEALPDDPSSLRGDLAVPGNPVTAAARRGTPTHQAPVALPASRTVVAPR) is disordered.

Belongs to the PanD family. Heterooctamer of four alpha and four beta subunits. Requires pyruvate as cofactor. In terms of processing, is synthesized initially as an inactive proenzyme, which is activated by self-cleavage at a specific serine bond to produce a beta-subunit with a hydroxyl group at its C-terminus and an alpha-subunit with a pyruvoyl group at its N-terminus.

It is found in the cytoplasm. It carries out the reaction L-aspartate + H(+) = beta-alanine + CO2. The protein operates within cofactor biosynthesis; (R)-pantothenate biosynthesis; beta-alanine from L-aspartate: step 1/1. In terms of biological role, catalyzes the pyruvoyl-dependent decarboxylation of aspartate to produce beta-alanine. The protein is Aspartate 1-decarboxylase of Frankia alni (strain DSM 45986 / CECT 9034 / ACN14a).